The sequence spans 235 residues: Riboflavin kinase (235 aa).

Residues threonine 45 and asparagine 47 each coordinate Mg(2+). Glutamate 140 functions as the Nucleophile in the catalytic mechanism.

This sequence belongs to the flavokinase family. It depends on Zn(2+) as a cofactor. Requires Mg(2+) as cofactor.

It catalyses the reaction riboflavin + ATP = FMN + ADP + H(+). The protein operates within cofactor biosynthesis; FMN biosynthesis; FMN from riboflavin (ATP route): step 1/1. In terms of biological role, catalyzes the phosphorylation of riboflavin (vitamin B2) to form flavin mononucleotide (FMN) coenzyme. In Chaetomium globosum (strain ATCC 6205 / CBS 148.51 / DSM 1962 / NBRC 6347 / NRRL 1970) (Soil fungus), this protein is Riboflavin kinase (FMN1).